Reading from the N-terminus, the 102-residue chain is NADH-quinone oxidoreductase subunit K (102 aa).

Helical transmembrane passes span 6–26 (LEHGLAVAGVLFCLGLVGLMV), 30–50 (ILFVLMSLEIMMNAAALAFVV), and 62–82 (VMFILVISLAAAEASIGLAIL).

The protein belongs to the complex I subunit 4L family. NDH-1 is composed of 13 different subunits. Subunits NuoA, H, J, K, L, M, N constitute the membrane sector of the complex.

It localises to the cell inner membrane. It catalyses the reaction a quinone + NADH + 5 H(+)(in) = a quinol + NAD(+) + 4 H(+)(out). Its function is as follows. NDH-1 shuttles electrons from NADH, via FMN and iron-sulfur (Fe-S) centers, to quinones in the respiratory chain. The immediate electron acceptor for the enzyme in this species is believed to be ubiquinone. Couples the redox reaction to proton translocation (for every two electrons transferred, four hydrogen ions are translocated across the cytoplasmic membrane), and thus conserves the redox energy in a proton gradient. This Pseudomonas syringae pv. tomato (strain ATCC BAA-871 / DC3000) protein is NADH-quinone oxidoreductase subunit K.